Consider the following 263-residue polypeptide: Small ribosomal subunit protein eS4, Y isoform 2 (263 aa).

One can recognise an S4 RNA-binding domain in the interval 42–104 (LPLIVFLRNR…TGEHFRLVYN (63 aa)).

This sequence belongs to the eukaryotic ribosomal protein eS4 family.

The sequence is that of Small ribosomal subunit protein eS4, Y isoform 2 (RPS4Y2) from Homo sapiens (Human).